The chain runs to 257 residues: Acetylglutamate kinase (257 aa).

Substrate-binding positions include 43–44 (GG), R65, and N157.

It belongs to the acetylglutamate kinase family. ArgB subfamily.

It is found in the cytoplasm. The catalysed reaction is N-acetyl-L-glutamate + ATP = N-acetyl-L-glutamyl 5-phosphate + ADP. Its pathway is amino-acid biosynthesis; L-arginine biosynthesis; N(2)-acetyl-L-ornithine from L-glutamate: step 2/4. Catalyzes the ATP-dependent phosphorylation of N-acetyl-L-glutamate. The protein is Acetylglutamate kinase of Pasteurella multocida (strain Pm70).